The following is a 151-amino-acid chain: Ubiquitin-like protein 4A-B (151 aa).

Residues Met1–Glu76 enclose the Ubiquitin-like domain.

In terms of assembly, component of the BAT3 complex.

The protein resides in the cytoplasm. Its subcellular location is the cytosol. Functionally, component of the BAT3 complex, a multiprotein complex involved in the post-translational delivery of tail-anchored (TA) membrane proteins to the endoplasmic reticulum membrane. TA membrane proteins, also named type II transmembrane proteins, contain a single C-terminal transmembrane region. This chain is Ubiquitin-like protein 4A-B (ubl4ab), found in Oncorhynchus mykiss (Rainbow trout).